Consider the following 229-residue polypeptide: Protein GrpE (229 aa).

Disordered regions lie at residues 1–49 (MTEG…SANS) and 207–229 (DSTAKTEQGELGDNVTPHKEDGD). Basic and acidic residues predominate over residues 13–24 (TDKRRIDPDTGE).

Belongs to the GrpE family. In terms of assembly, homodimer.

It is found in the cytoplasm. Functionally, participates actively in the response to hyperosmotic and heat shock by preventing the aggregation of stress-denatured proteins, in association with DnaK and GrpE. It is the nucleotide exchange factor for DnaK and may function as a thermosensor. Unfolded proteins bind initially to DnaJ; upon interaction with the DnaJ-bound protein, DnaK hydrolyzes its bound ATP, resulting in the formation of a stable complex. GrpE releases ADP from DnaK; ATP binding to DnaK triggers the release of the substrate protein, thus completing the reaction cycle. Several rounds of ATP-dependent interactions between DnaJ, DnaK and GrpE are required for fully efficient folding. This Mycobacterium leprae (strain TN) protein is Protein GrpE.